We begin with the raw amino-acid sequence, 78 residues long: uncharacterized protein (78 aa).

Residues 1-22 form the signal peptide; it reads MFKKSVLFATLLSGVMAFSTNA.

It belongs to the BhsA/McbA family.

The protein localises to the periplasm. Its function is as follows. Probably involved in reactive chlorine species (RCS) stress resistance. This is an uncharacterized protein from Escherichia coli (strain K12).